The chain runs to 322 residues: Mitochondrial thiamine pyrophosphate carrier 1 (322 aa).

Solcar repeat units follow at residues 12-111, 122-208, and 215-310; these read GSKT…VTLA, PAAA…LRVP, and PFGS…VLRL. 6 helical membrane-spanning segments follow: residues 18 to 38, 92 to 108, 128 to 148, 180 to 200, 221 to 241, and 285 to 302; these read MIAG…LDVV, LMYV…YRSV, FIAG…LDLL, FFQG…IFFA, ATAG…FDLI, and GLTV…VTMW.

The protein belongs to the mitochondrial carrier (TC 2.A.29) family.

The protein localises to the mitochondrion inner membrane. In terms of biological role, mitochondrial transporter that mediates uptake of thiamine pyrophosphate (ThPP) into mitochondria. The protein is Mitochondrial thiamine pyrophosphate carrier 1 (tpc1) of Sclerotinia sclerotiorum (strain ATCC 18683 / 1980 / Ss-1) (White mold).